Reading from the N-terminus, the 348-residue chain is Phospho-2-dehydro-3-deoxyheptonate aldolase, Trp-sensitive (348 aa).

The protein belongs to the class-I DAHP synthase family.

It catalyses the reaction D-erythrose 4-phosphate + phosphoenolpyruvate + H2O = 7-phospho-2-dehydro-3-deoxy-D-arabino-heptonate + phosphate. It functions in the pathway metabolic intermediate biosynthesis; chorismate biosynthesis; chorismate from D-erythrose 4-phosphate and phosphoenolpyruvate: step 1/7. Functionally, stereospecific condensation of phosphoenolpyruvate (PEP) and D-erythrose-4-phosphate (E4P) giving rise to 3-deoxy-D-arabino-heptulosonate-7-phosphate (DAHP). The chain is Phospho-2-dehydro-3-deoxyheptonate aldolase, Trp-sensitive (aroH) from Buchnera aphidicola subsp. Acyrthosiphon pisum (strain APS) (Acyrthosiphon pisum symbiotic bacterium).